A 450-amino-acid chain; its full sequence is Phosphopentomutase (450 aa).

S93 serves as the catalytic Phosphoserine intermediate. Mg(2+)-binding residues include S93, D231, D233, and D235. A Phosphoserine; by autocatalysis modification is found at S93.

Belongs to the phosphohexose mutase family. In terms of assembly, homotetramer. Requires Mg(2+) as cofactor. Activated by phosphorylation.

It catalyses the reaction alpha-D-ribose 1-phosphate = D-ribose 5-phosphate. The enzyme catalyses 2-deoxy-alpha-D-ribose 1-phosphate = 2-deoxy-D-ribose 5-phosphate. In terms of biological role, catalyzes the conversion of deoxyribose 1-phosphate to deoxyribose 5-phosphate. Also shows weak activity with glucose 1-phosphate and mannose 1-phosphate. Could be involved in pentose biosynthesis. This is Phosphopentomutase from Thermococcus kodakarensis (strain ATCC BAA-918 / JCM 12380 / KOD1) (Pyrococcus kodakaraensis (strain KOD1)).